We begin with the raw amino-acid sequence, 241 residues long: Keratin-associated protein 5-5 (241 aa).

15 repeat units span residues 35–38 (CCKP), 41–44 (CCKP), 47–50 (CCVP), 105–108 (CCKP), 115–118 (CCKP), 133–136 (CCKP), 143–146 (CCKP), 161–164 (CCKP), 171–174 (CCKP), 181–184 (CCKP), 191–194 (CCKP), 201–204 (CCKP), 211–214 (CCKP), 221–224 (CCKP), and 231–234 (CCAP). Positions 35–234 (CCKPVCCCKP…CCCQSSCCAP (200 aa)) are 15 X 4 AA repeats of C-C-X-P.

The protein belongs to the KRTAP type 5 family. Interacts with hair keratins.

In the hair cortex, hair keratin intermediate filaments are embedded in an interfilamentous matrix, consisting of hair keratin-associated protein (KRTAP), which are essential for the formation of a rigid and resistant hair shaft through their extensive disulfide bond cross-linking with abundant cysteine residues of hair keratins. The matrix proteins include the high-sulfur and high-glycine-tyrosine keratins. This is Keratin-associated protein 5-5 from Mus musculus (Mouse).